The following is a 662-amino-acid chain: Probable dolichyl-phosphate-mannose--protein mannosyltransferase 7 (662 aa).

Topologically, residues 1 to 26 (MKDLRLQGPYRKYIPYNIFQQCGIGH) are lumenal. A helical membrane pass occupies residues 27–47 (LKTLDYIFAFLIVITNFTLIW). The Cytoplasmic portion of the chain corresponds to 48–159 (KSHSSSFWNR…GTIISFDSLE (112 aa)). A helical transmembrane segment spans residues 160–180 (WCLFSVVIYSFISISIAKLGT). The Lumenal segment spans residues 181-195 (TNWFANVITLSISLG). Residues 196 to 216 (LAISSKFIGIVTWAFVILSFV) traverse the membrane as a helical segment. Residues 217-235 (RQFDRLISDVKVTTIQIIK) lie on the Cytoplasmic side of the membrane. A helical transmembrane segment spans residues 236 to 256 (FVILCLLFVLIIPGSIFIISY). The Lumenal segment spans residues 257–482 (SNLLSNFKTD…MEYPVIPRTT (226 aa)). In terms of domain architecture, MIR 1 spans 289–344 (PSRLYYGSTITLRHLDSMVGYLASHDISYPSDVDEQLVALSFEEFAADNEWLIEHP). N-linked (GlcNAc...) asparagine glycosylation is present at Asn347. MIR domains lie at 359 to 418 (LIPV…VLLI) and 432 to 488 (DKYI…IDSV). Residues 483–503 (FLIDSVQLPVDFQVPMIEYYI) traverse the membrane as a helical segment. The Cytoplasmic segment spans residues 504–565 (GKISSSAEFN…KWPITLDTDS (62 aa)). The chain crosses the membrane as a helical span at residues 566–586 (PVWFNFAWYGSLLSMIIFMCV). Residues 587-617 (QCKRMISWNPWTTAEPSFSIKWEVYNEFGWE) are Lumenal-facing. The chain crosses the membrane as a helical span at residues 618-638 (CIVGWFLHFYIFTMSPHFNLG). Topologically, residues 639–662 (KKLYFQSFFFSVLCLLESLDCLAK) are cytoplasmic.

It belongs to the glycosyltransferase 39 family.

It is found in the endoplasmic reticulum membrane. It catalyses the reaction a di-trans,poly-cis-dolichyl beta-D-mannosyl phosphate + L-seryl-[protein] = 3-O-(alpha-D-mannosyl)-L-seryl-[protein] + a di-trans,poly-cis-dolichyl phosphate + H(+). The enzyme catalyses a di-trans,poly-cis-dolichyl beta-D-mannosyl phosphate + L-threonyl-[protein] = 3-O-(alpha-D-mannosyl)-L-threonyl-[protein] + a di-trans,poly-cis-dolichyl phosphate + H(+). It participates in protein modification; protein glycosylation. Its function is as follows. Probable protein O-mannosyltransferase involved in O-glycosylation which is essential for cell wall rigidity. Transfers mannose from Dol-P-mannose to Ser or Thr residues on proteins. This chain is Probable dolichyl-phosphate-mannose--protein mannosyltransferase 7, found in Saccharomyces cerevisiae (strain ATCC 204508 / S288c) (Baker's yeast).